A 287-amino-acid chain; its full sequence is 4-hydroxybenzoate octaprenyltransferase (287 aa).

6 helical membrane-spanning segments follow: residues 41-61, 92-112, 133-153, 160-180, 197-217, and 267-287; these read VSLL…GCAI, VALA…LNAL, FFAI…PMAF, VPLL…AYDT, TSAL…YAVT, and NNWL…AQAF.

The protein belongs to the UbiA prenyltransferase family. Requires Mg(2+) as cofactor.

It localises to the cell inner membrane. It carries out the reaction all-trans-octaprenyl diphosphate + 4-hydroxybenzoate = 4-hydroxy-3-(all-trans-octaprenyl)benzoate + diphosphate. Its pathway is cofactor biosynthesis; ubiquinone biosynthesis. Its function is as follows. Catalyzes the prenylation of para-hydroxybenzoate (PHB) with an all-trans polyprenyl group. Mediates the second step in the final reaction sequence of ubiquinone-8 (UQ-8) biosynthesis, which is the condensation of the polyisoprenoid side chain with PHB, generating the first membrane-bound Q intermediate 3-octaprenyl-4-hydroxybenzoate. The sequence is that of 4-hydroxybenzoate octaprenyltransferase from Paraburkholderia phymatum (strain DSM 17167 / CIP 108236 / LMG 21445 / STM815) (Burkholderia phymatum).